The primary structure comprises 737 residues: Protein bicaudal D homolog (737 aa).

Coiled-coil stretches lie at residues 1 to 255, 292 to 319, and 547 to 684; these read MAES…RNAE, GSSD…EKIF, and AENE…DRDR. The interval 72 to 97 is disordered; that stretch reads YRSQHQRSTRSELENEESLLEESSAK. The tract at residues 686–737 is disordered; the sequence is VFKRSSTRAPTRETYQPPRAVRYPGSTTTAQQPAPSSSGGSRGGPRRGDNQQ. Residues 710 to 719 are compositionally biased toward polar residues; it reads GSTTTAQQPA.

It belongs to the BicD family. In terms of assembly, component of a dynein-regulating complex composed of at least bicd-1, dlc-1 and egal-1. Interacts with egal-1 and unc-83. Expressed in the excretory cell, body wall muscles, vulval muscle cells, PVD and FLP sensory neurons and AVF interneurons.

Its subcellular location is the nucleus envelope. The protein resides in the perikaryon. The protein localises to the cell projection. It is found in the dendrite. In terms of biological role, part of a complex with dlc-1 and egal-1, which is recruited to the nuclear envelope by unc-83, where in turn, it recruits dynein to the nuclear surface and regulates nuclear migration in hypodermal precursor cells. Required for the formation of dendritic branches of PVD sensory neurons. The polypeptide is Protein bicaudal D homolog (Caenorhabditis elegans).